A 383-amino-acid chain; its full sequence is Probable L-tyrosine/L-aspartate decarboxylase (383 aa).

Position 227 is an N6-(pyridoxal phosphate)lysine (Lys-227).

Belongs to the group II decarboxylase family. MfnA subfamily. It depends on pyridoxal 5'-phosphate as a cofactor.

The catalysed reaction is L-tyrosine + H(+) = tyramine + CO2. The enzyme catalyses L-aspartate + H(+) = beta-alanine + CO2. It functions in the pathway cofactor biosynthesis; methanofuran biosynthesis. It participates in cofactor biosynthesis; coenzyme A biosynthesis. Catalyzes the decarboxylation of L-tyrosine to produce tyramine for methanofuran biosynthesis. Can also catalyze the decarboxylation of L-aspartate to produce beta-alanine for coenzyme A (CoA) biosynthesis. The chain is Probable L-tyrosine/L-aspartate decarboxylase from Methanothrix thermoacetophila (strain DSM 6194 / JCM 14653 / NBRC 101360 / PT) (Methanosaeta thermophila).